The primary structure comprises 915 residues: Phototropin-2 (915 aa).

A compositionally biased stretch (pro residues) spans 1–10 (MERPRAPPSP). Disordered regions lie at residues 1-62 (MERP…EFQD) and 84-118 (DDGISFKLSSEVERSKNMSRRSSEESTSSESGAFP). Phosphoserine occurs at positions 9 and 22. Residues 27–43 (NPSSGKETHGSTSSSSK) are compositionally biased toward polar residues. Over residues 93–107 (SEVERSKNMSRRSSE) the composition is skewed to basic and acidic residues. A PAS 1 domain is found at 120-193 (VSQELKTALS…AKIRDCVKNG (74 aa)). Position 121 is a phosphoserine (serine 121). Residue asparagine 169 coordinates FMN. The residue at position 170 (cysteine 170) is an S-4a-FMN cysteine. FMN is bound by residues arginine 171, glutamine 174, arginine 187, asparagine 202, asparagine 212, glutamine 233, and lysine 238. A PAC 1 domain is found at 194–248 (KSYCGRLLNYKKDGTPFWNLLTVTPIKDDQGNTIKFIGMQVEVSKYTEGVNDKAL). Positions 281–344 (HRKSQVQESV…KSSNNRHEDL (64 aa)) are disordered. Polar residues-rich tracts occupy residues 286–310 (VQESVSNDTMVKPDSSTTPTPGRQT) and 325–337 (RVSTPTGSKLKSS). Serine 364 is subject to Phosphoserine. The 74-residue stretch at 376-449 (QGIDLATTLE…QKIRDAIRDQ (74 aa)) folds into the PAS 2 domain. Residue asparagine 425 coordinates FMN. Residue cysteine 426 is modified to S-4a-FMN cysteine. Residues arginine 427, glutamine 430, arginine 443, asparagine 458, asparagine 468, phenylalanine 470, and glutamine 489 each coordinate FMN. The 55-residue stretch at 450–504 (REITVQLINYTKSGKKFWNLFHLQPMRDQKGELQYFIGVQLDGSDHVEPLQNRLS) folds into the PAC 2 domain. A Protein kinase domain is found at 577–864 (FKPIKPLGSG…ANEIKQHAFF (288 aa)). ATP-binding positions include 583–591 (LGSGDTGSV) and lysine 606. Residue aspartate 702 is the Proton acceptor of the active site. Residues 720–774 (DFDLSFMTTCTPQLIIPAAPSKRRRSKSQPLPTFVAEPSTQSNSFVGTEEYIAPE) are activation loop.

It belongs to the protein kinase superfamily. AGC Ser/Thr protein kinase family. Homodimer. Interacts with PKS1, PKS2, RPT3 and PHOT1. Associates with CBC1 and CBC2. Binds to BHP. FMN is required as a cofactor. Post-translationally, autophosphorylated in response to blue light irradiation. In terms of processing, 2 molecules of FMN bind covalently to cysteines after exposure to blue light and are reversed in the dark. In terms of tissue distribution, expressed in leaves, stems and flowers, and to a lower extent in roots. Present in guard cells (at protein level).

The protein localises to the cell membrane. The catalysed reaction is L-seryl-[protein] + ATP = O-phospho-L-seryl-[protein] + ADP + H(+). The enzyme catalyses L-threonyl-[protein] + ATP = O-phospho-L-threonyl-[protein] + ADP + H(+). Its activity is regulated as follows. Autophosphorylation is inhibited by staurosporine, but not by tyrphostin 9, sphingosine, GW5074 and BML-265. Protein kinase that acts as a blue light photoreceptor in a signal-transduction pathway for photo-induced movements. Triggers the phosphorylation of AHA1 and AHA2 C-terminal penultimate Thr in guard cells to activate them and induce stomatal opening in response to blue light (BL). Also phosphorylates BLUS1, a kinase involved in stomatal opening. Mediates calcium spiking of extra- and intracellular origins in response to blue light. Involved in hypocotyl phototropism. Contributes to the chloroplast accumulation in low blue light and mediates their translocation (avoidance response) at high fluence. Regulates stomata opening and photomorphogenesis response of leaf tissue. Not involved in hypocotyl elongation inhibition, anthocyanin accumulation or cotyledon opening. The sequence is that of Phototropin-2 from Arabidopsis thaliana (Mouse-ear cress).